The following is a 310-amino-acid chain: Transcription initiation factor TFIID subunit 8 (310 aa).

The interval 1 to 30 (MADAAATAGAGGSGTRSGSKQSTNPADNYH) is disordered. Position 2 is an N-acetylalanine (alanine 2). A Histone-fold; involved in forming hexamer structure in TFIID complex domain is found at 35–102 (RTLQVVVSSL…IVVTLVEMGF (68 aa)). The residue at position 130 (threonine 130) is a Phosphothreonine. The segment at 262-310 (DSGAEKENTSVLQQNPSLSGSRNGEENIIDNPYLRPVKKPKIRRKKSLS) is disordered. A compositionally biased stretch (polar residues) spans 270 to 283 (TSVLQQNPSLSGSR). At serine 271 the chain carries Phosphoserine. Residues 294-307 (YLRPVKKPKIRRKK) carry the Nuclear localization signal motif. Positions 297–310 (PVKKPKIRRKKSLS) are enriched in basic residues.

This sequence belongs to the TAF8 family. Component of the TFIID basal transcription factor complex, composed of TATA-box-binding protein TBP, and a number of TBP-associated factors (TAFs), including TAF1, TAF2, TAF3, TAF4, TAF5, TAF6, TAF7, TAF8, TAF9, TAF10, TAF11, TAF12 and TAF13. Interacts with TBP, TAF1, TAF6, TAF10, TAF11 and TAF13. Component also of a small TAF complex (SMAT) containing TAF8, TAF10 and SUPT7L. Forms a heterodimer with TAF10. Interaction with TAF10 is mediated mainly via its histone fold domain while interaction with SUPT7L is via its C-terminal region.

The protein localises to the nucleus. It localises to the cytoplasm. The TFIID basal transcription factor complex plays a major role in the initiation of RNA polymerase II (Pol II)-dependent transcription. TFIID recognizes and binds promoters with or without a TATA box via its subunit TBP, a TATA-box-binding protein, and promotes assembly of the pre-initiation complex (PIC). The TFIID complex consists of TBP and TBP-associated factors (TAFs), including TAF1, TAF2, TAF3, TAF4, TAF5, TAF6, TAF7, TAF8, TAF9, TAF10, TAF11, TAF12 and TAF13. The TFIID complex structure can be divided into 3 modules TFIID-A, TFIID-B, and TFIID-C. TAF8 is involved in forming the TFIID-B module, together with TAF5. Mediates both basal and activator-dependent transcription. Plays a role in the differentiation of preadipocyte fibroblasts to adipocytes, however, does not seem to play a role in differentiation of myoblasts. Required for the integration of TAF10 in the TAF complex. May be important for survival of cells of the inner cell mass which constitute the pluripotent cell population of the early embryo. In Homo sapiens (Human), this protein is Transcription initiation factor TFIID subunit 8 (TAF8).